Here is a 361-residue protein sequence, read N- to C-terminus: D-alanine--D-alanine ligase (361 aa).

Residues 134–344 enclose the ATP-grasp domain; that stretch reads KLLLKSFNIP…FKDLIDNLID (211 aa). An ATP-binding site is contributed by 167 to 222; sequence KEVLGYPVIVKPAVLGSSIGINVAYSENQIESCIEEALKYDLTIVIEKFIEAREIE. Residues aspartate 297, glutamate 311, and asparagine 313 each coordinate Mg(2+).

The protein belongs to the D-alanine--D-alanine ligase family. It depends on Mg(2+) as a cofactor. The cofactor is Mn(2+).

The protein localises to the cytoplasm. The catalysed reaction is 2 D-alanine + ATP = D-alanyl-D-alanine + ADP + phosphate + H(+). It functions in the pathway cell wall biogenesis; peptidoglycan biosynthesis. In terms of biological role, cell wall formation. In Borreliella afzelii (strain PKo) (Borrelia afzelii), this protein is D-alanine--D-alanine ligase.